The chain runs to 145 residues: Superoxide dismutase [Mn/Fe] (145 aa).

Fe(3+) is bound by residues histidine 10 and histidine 64. Histidine 10 and histidine 64 together coordinate Mn(2+).

It belongs to the iron/manganese superoxide dismutase family. Mn(2+) is required as a cofactor. It depends on Fe(3+) as a cofactor.

It carries out the reaction 2 superoxide + 2 H(+) = H2O2 + O2. Functionally, destroys superoxide anion radicals which are normally produced within the cells and which are toxic to biological systems. Catalyzes the dismutation of superoxide anion radicals into O2 and H2O2 by successive reduction and oxidation of the transition metal ion at the active site. In Streptococcus salivarius, this protein is Superoxide dismutase [Mn/Fe] (sodA).